The chain runs to 91 residues: Small ribosomal subunit protein uS19 (91 aa).

Belongs to the universal ribosomal protein uS19 family.

In terms of biological role, protein S19 forms a complex with S13 that binds strongly to the 16S ribosomal RNA. This chain is Small ribosomal subunit protein uS19, found in Sulfurimonas denitrificans (strain ATCC 33889 / DSM 1251) (Thiomicrospira denitrificans (strain ATCC 33889 / DSM 1251)).